Reading from the N-terminus, the 298-residue chain is ATP synthase gamma chain (298 aa).

This sequence belongs to the ATPase gamma chain family. In terms of assembly, F-type ATPases have 2 components, CF(1) - the catalytic core - and CF(0) - the membrane proton channel. CF(1) has five subunits: alpha(3), beta(3), gamma(1), delta(1), epsilon(1). CF(0) has three main subunits: a, b and c.

The protein localises to the cell inner membrane. Functionally, produces ATP from ADP in the presence of a proton gradient across the membrane. The gamma chain is believed to be important in regulating ATPase activity and the flow of protons through the CF(0) complex. The protein is ATP synthase gamma chain of Albidiferax ferrireducens (strain ATCC BAA-621 / DSM 15236 / T118) (Rhodoferax ferrireducens).